We begin with the raw amino-acid sequence, 392 residues long: S-adenosylmethionine synthase (392 aa).

His-20 is an ATP binding site. Asp-22 provides a ligand contact to Mg(2+). Glu-48 contributes to the K(+) binding site. L-methionine is bound by residues Glu-61 and Gln-106. The interval 106 to 116 (QSRDIINAIEK) is flexible loop. ATP contacts are provided by residues 171–173 (DSK), Asp-248, 254–255 (RK), Ala-271, and Lys-275. Asp-248 is a binding site for L-methionine. Lys-279 is an L-methionine binding site.

It belongs to the AdoMet synthase family. Homotetramer; dimer of dimers. The cofactor is Mg(2+). K(+) serves as cofactor.

It is found in the cytoplasm. It carries out the reaction L-methionine + ATP + H2O = S-adenosyl-L-methionine + phosphate + diphosphate. The protein operates within amino-acid biosynthesis; S-adenosyl-L-methionine biosynthesis; S-adenosyl-L-methionine from L-methionine: step 1/1. Catalyzes the formation of S-adenosylmethionine (AdoMet) from methionine and ATP. The overall synthetic reaction is composed of two sequential steps, AdoMet formation and the subsequent tripolyphosphate hydrolysis which occurs prior to release of AdoMet from the enzyme. This is S-adenosylmethionine synthase from Borreliella afzelii (strain PKo) (Borrelia afzelii).